A 691-amino-acid polypeptide reads, in one-letter code: MARTQAEPPASQPDARAAWLRDQLERANYAYYVLDQPDLPDAEYDRLFGELQQLETDHPDLVTPDSPTQRVGGEVAGGFTPVVHDAPMLSLNNGFADEDIAAFDKRVADALGKTTDLAGSVTDPVEYACELKFDGLAISLRYEHGVFVQASTRGDGTTGEDVTENVRTIRSIPLKLKGAHVPALLDVRGEVLMFKRDFARLNERQRAAEQREFANPRNAAAGSLRQLDPKITAQRPLSFFAYGIGVLDGMPMPDTHSALLDWYESFGLPVNRERAVVYGADGLLGFFRKVGEKRESLPYDIDGVVYKVNRRDEQDRLGFVSRAPRFALAHKFPAQEALTRLVAIDVQVGRTGAITPVARLEPVFVGGATVTNATLHNEDEVRRKDIRIGDTVIVRRAGDVIPEVVGALLERRPDDAAEFVMPTECPVCGSKIERLPDEAIARCTGGLFCPAQRKQALWHFAQRRALDIDGLGEKIIDQLVELNLVRTPADLFNLGFATLAELDRFAEKSAQNLLDSLEKAKHTTLARFIYGLGIRHVGESTAKDLAKHFGSLTPIMDASIEELLEVNDVGPIVAESIHQFFAEEHNRTVIEQLRAPGKVTWPEGPPAPKAPQGVLAGKTVVLTGTLPNLTRDAAKEMLEAAGAKVAGSVSKKTDYVVAGADAGSKLAKAEELGIPVLDEDGLHQLLEGNTP.

NAD(+) is bound by residues aspartate 41–aspartate 45, serine 90–leucine 91, and glutamate 130. Lysine 132 (N6-AMP-lysine intermediate) is an active-site residue. 4 residues coordinate NAD(+): arginine 153, glutamate 190, lysine 307, and lysine 331. Residues cysteine 425, cysteine 428, cysteine 443, and cysteine 449 each contribute to the Zn(2+) site. One can recognise a BRCT domain in the interval alanine 610–proline 691.

Belongs to the NAD-dependent DNA ligase family. LigA subfamily. The cofactor is Mg(2+). Mn(2+) is required as a cofactor.

The enzyme catalyses NAD(+) + (deoxyribonucleotide)n-3'-hydroxyl + 5'-phospho-(deoxyribonucleotide)m = (deoxyribonucleotide)n+m + AMP + beta-nicotinamide D-nucleotide.. DNA ligase that catalyzes the formation of phosphodiester linkages between 5'-phosphoryl and 3'-hydroxyl groups in double-stranded DNA using NAD as a coenzyme and as the energy source for the reaction. It is essential for DNA replication and repair of damaged DNA. The protein is DNA ligase of Burkholderia ambifaria (strain MC40-6).